The primary structure comprises 293 residues: Eukaryotic translation initiation factor 3 subunit F (293 aa).

Alanine 2 bears the N-acetylalanine mark. The 132-residue stretch at 28 to 159 (ARIHPLVIFN…IKAFVSSNLS (132 aa)) folds into the MPN domain.

It belongs to the eIF-3 subunit F family. Component of the eukaryotic translation initiation factor 3 (eIF-3) complex. Binds to TIF3E1 and TIF3H1. In terms of tissue distribution, expressed in inflorescences, leaves, stems, siliques, roots and seedlings. Accumulates at highly levels in pollen grains, developing embryos and root tips.

The protein resides in the cytoplasm. Functionally, component of the eukaryotic translation initiation factor 3 (eIF-3) complex, which is involved in protein synthesis of a specialized repertoire of mRNAs and, together with other initiation factors, stimulates binding of mRNA and methionyl-tRNAi to the 40S ribosome. The eIF-3 complex specifically targets and initiates translation of a subset of mRNAs involved in cell proliferation (Potential). Involved in cell growth and differentiation, especially during embryogenesis and male gametophyte germination. Regulates sensitivity to sugars (e.g. sucrose). The protein is Eukaryotic translation initiation factor 3 subunit F (TIF3F1) of Arabidopsis thaliana (Mouse-ear cress).